A 1374-amino-acid chain; its full sequence is Sterol 3-beta-glucosyltransferase (1374 aa).

Residues 1–14 (MRPLRDDAKRRADR) show a composition bias toward basic and acidic residues. Disordered regions lie at residues 1–60 (MRPL…RDGN), 83–190 (ARFD…PRAA), and 206–227 (TSAT…QPQS). Residues 16 to 28 (LSASMKPTSSNRP) show a composition bias toward polar residues. Positions 29 to 41 (FSDRVPDRFKDGD) are enriched in basic and acidic residues. Over residues 101–112 (VEQTTGKASSRT) the composition is skewed to polar residues. Over residues 125-138 (KRSEPSKLVLEERG) the composition is skewed to basic and acidic residues. Residues 234 to 283 (MRLMKMFEFAKPEKVLVEYACSLLQSMLLQGYMYVTEGHICFYAYLPKKS) enclose the GRAM 1 domain. The 98-residue stretch at 285–382 (VAIKSGYLSK…WVKALQQVIF (98 aa)) folds into the PH domain. The segment at 458-538 (ATKEAQDQHD…SMTDTTESAS (81 aa)) is disordered. Basic and acidic residues-rich tracts occupy residues 461–473 (EAQD…HQPE) and 490–499 (SDQRREDSPR). Polar residues predominate over residues 503–538 (SSVGNENQGSADSFAEQGTGSSPIIQSMTDTTESAS). A GRAM 2 domain is found at 704-770 (DRFRAHFALP…KDIENVEKEK (67 aa)). UDP-alpha-D-glucose contacts are provided by serine 893, arginine 894, aspartate 896, alanine 1196, histidine 1198, histidine 1211, glycine 1215, threonine 1216, aspartate 1235, and glutamine 1236. Polar residues predominate over residues 1314 to 1325 (ASSTPFSPTPTA). Positions 1314 to 1338 (ASSTPFSPTPTAKASPDGGDDDLDD) are disordered.

It belongs to the glycosyltransferase 28 family.

It is found in the cytoplasm. The protein localises to the preautophagosomal structure membrane. The catalysed reaction is a sterol + UDP-alpha-D-glucose = a sterol 3-beta-D-glucoside + UDP + H(+). It carries out the reaction ergosterol + UDP-alpha-D-glucose = ergosteryl 3-beta-D-glucoside + UDP + H(+). Sterol glycosyltransferase responsible for the glycosylation of ergosterol to form ergosterol-glucoside. The chain is Sterol 3-beta-glucosyltransferase from Penicillium rubens (strain ATCC 28089 / DSM 1075 / NRRL 1951 / Wisconsin 54-1255) (Penicillium chrysogenum).